Reading from the N-terminus, the 72-residue chain is Translation initiation factor IF-1 (72 aa).

Residues 1 to 72 (MSKQDVIEVE…TRGRIVYRYK (72 aa)) form the S1-like domain.

Belongs to the IF-1 family. In terms of assembly, component of the 30S ribosomal translation pre-initiation complex which assembles on the 30S ribosome in the order IF-2 and IF-3, IF-1 and N-formylmethionyl-tRNA(fMet); mRNA recruitment can occur at any time during PIC assembly.

It is found in the cytoplasm. One of the essential components for the initiation of protein synthesis. Stabilizes the binding of IF-2 and IF-3 on the 30S subunit to which N-formylmethionyl-tRNA(fMet) subsequently binds. Helps modulate mRNA selection, yielding the 30S pre-initiation complex (PIC). Upon addition of the 50S ribosomal subunit IF-1, IF-2 and IF-3 are released leaving the mature 70S translation initiation complex. This Pelotomaculum thermopropionicum (strain DSM 13744 / JCM 10971 / SI) protein is Translation initiation factor IF-1.